The chain runs to 677 residues: WD and tetratricopeptide repeats protein 1 (677 aa).

WD repeat units lie at residues 45-84 (GHSG…KLLS), 88-129 (GHTA…TIHM), 132-172 (DHTN…KHSE), 182-222 (GPMV…NHRK), and 265-305 (RLRV…RPYT). S352 bears the Phosphoserine mark. 2 TPR repeats span residues 361–394 (LERV…APHN) and 396–431 (MLYG…NPCH). Residues 489–509 (EEKKAAGGGGGPVRLRSTSRK) are disordered. S511 carries the post-translational modification Phosphoserine. WD repeat units lie at residues 535–575 (NTTT…LVRV) and 578–617 (GDES…EDLT). Positions 655–677 (SSGGAGASDDEDSAEGQVQCRPS) are disordered.

The protein operates within protein modification; protein ubiquitination. Its function is as follows. May function as a substrate receptor for CUL4-DDB1 E3 ubiquitin-protein ligase complex. This chain is WD and tetratricopeptide repeats protein 1 (Wdtc1), found in Mus musculus (Mouse).